The following is a 406-amino-acid chain: Ubiquitin-like modifier-activating enzyme 5 (406 aa).

Gly82, Asp103, Lys126, Asn149, and Asn183 together coordinate ATP. Zn(2+) is bound by residues Cys225 and Cys228. The active-site Glycyl thioester intermediate is the Cys249. Zn(2+) is bound by residues Cys302 and Cys307. The segment at 373 to 397 is disordered; it reads EAPSKSTETTSEATTTTTGDETSLD. Over residues 378 to 393 the composition is skewed to low complexity; the sequence is STETTSEATTTTTGDE.

Belongs to the ubiquitin-activating E1 family. UBA5 subfamily.

Its function is as follows. E1-like enzyme which activates UFM1. The sequence is that of Ubiquitin-like modifier-activating enzyme 5 from Drosophila willistoni (Fruit fly).